Here is a 282-residue protein sequence, read N- to C-terminus: ATP phosphoribosyltransferase (282 aa).

It belongs to the ATP phosphoribosyltransferase family. Long subfamily. Requires Mg(2+) as cofactor.

It is found in the cytoplasm. It catalyses the reaction 1-(5-phospho-beta-D-ribosyl)-ATP + diphosphate = 5-phospho-alpha-D-ribose 1-diphosphate + ATP. It participates in amino-acid biosynthesis; L-histidine biosynthesis; L-histidine from 5-phospho-alpha-D-ribose 1-diphosphate: step 1/9. With respect to regulation, feedback inhibited by histidine. Its function is as follows. Catalyzes the condensation of ATP and 5-phosphoribose 1-diphosphate to form N'-(5'-phosphoribosyl)-ATP (PR-ATP). Has a crucial role in the pathway because the rate of histidine biosynthesis seems to be controlled primarily by regulation of HisG enzymatic activity. This Pyrobaculum neutrophilum (strain DSM 2338 / JCM 9278 / NBRC 100436 / V24Sta) (Thermoproteus neutrophilus) protein is ATP phosphoribosyltransferase.